Consider the following 171-residue polypeptide: KRAB domain-containing protein 4 (171 aa).

Residues 8-79 enclose the KRAB domain; sequence LTFKDVFVDF…DGGTPVRTCA (72 aa).

In terms of tissue distribution, expressed in brain, ovary, testis, prostate, tonsil, heart, bone marrow, colon, breast and kidney.

This chain is KRAB domain-containing protein 4 (KRBOX4), found in Homo sapiens (Human).